Here is a 216-residue protein sequence, read N- to C-terminus: 3-isopropylmalate dehydratase small subunit (216 aa).

This sequence belongs to the LeuD family. LeuD type 1 subfamily. Heterodimer of LeuC and LeuD.

It catalyses the reaction (2R,3S)-3-isopropylmalate = (2S)-2-isopropylmalate. The protein operates within amino-acid biosynthesis; L-leucine biosynthesis; L-leucine from 3-methyl-2-oxobutanoate: step 2/4. In terms of biological role, catalyzes the isomerization between 2-isopropylmalate and 3-isopropylmalate, via the formation of 2-isopropylmaleate. This is 3-isopropylmalate dehydratase small subunit from Marinomonas sp. (strain MWYL1).